Reading from the N-terminus, the 139-residue chain is Histone H2B (139 aa).

Over residues 1 to 10 (MAPKVAEKKP) the composition is skewed to basic and acidic residues. The tract at residues 1-47 (MAPKVAEKKPSLAGKAPAGKAPAEKKEAGKKTTTATGEKKKRTKARK) is disordered. Residues Lys8 and Lys9 each carry the N6-acetyllysine; alternate modification. Residues Lys8 and Lys9 each participate in a glycyl lysine isopeptide (Lys-Gly) (interchain with G-Cter in SUMO); alternate cross-link. An N6-acetyllysine modification is found at Lys15. N6-acetyllysine; alternate is present on Lys25. A Glycyl lysine isopeptide (Lys-Gly) (interchain with G-Cter in SUMO); alternate cross-link involves residue Lys25. Residue Lys26 forms a Glycyl lysine isopeptide (Lys-Gly) (interchain with G-Cter in SUMO) linkage. Lys133 is covalently cross-linked (Glycyl lysine isopeptide (Lys-Gly) (interchain with G-Cter in ubiquitin)).

It belongs to the histone H2B family. The nucleosome is a histone octamer containing two molecules each of H2A, H2B, H3 and H4 assembled in one H3-H4 heterotetramer and two H2A-H2B heterodimers. The octamer wraps approximately 147 bp of DNA. Monoubiquitinated by the UBC2-BRE1 complex to form H2BK123ub1. H2BK123ub1 gives a specific tag for epigenetic transcriptional activation and is also prerequisite for H3K4me and H3K79me formation. H2BK123ub1 also modulates the formation of double-strand breaks during meiosis and is a prerequisite for DNA-damage checkpoint activation. Post-translationally, acetylated by GCN5 to form H2BK11ac and H2BK16ac. H2BK16ac can also be formed by ESA1. Acetylation of N-terminal lysines and particularly formation of H2BK11acK16ac has a positive effect on transcription. In terms of processing, sumoylation to form H2BK6su or H2BK7su, and probably also H2BK16su or H2BK17su, occurs preferentially near the telomeres and represses gene transcription.

The protein localises to the nucleus. It localises to the chromosome. Core component of nucleosome. Nucleosomes wrap and compact DNA into chromatin, limiting DNA accessibility to the cellular machineries which require DNA as a template. Histones thereby play a central role in transcription regulation, DNA repair, DNA replication and chromosomal stability. DNA accessibility is regulated via a complex set of post-translational modifications of histones, also called histone code, and nucleosome remodeling. The polypeptide is Histone H2B (HTB1) (Yarrowia lipolytica (strain CLIB 122 / E 150) (Yeast)).